Consider the following 1299-residue polypeptide: Phosphoribosylformylglycinamidine synthase (1299 aa).

ATP is bound by residues 310-321 (GAATGAGGEIRD), 389-391 (TGY), and Ala680. Positions 681, 720, 724, and 888 each coordinate Mg(2+). Ser890 contributes to the ATP binding site. A Glutamine amidotransferase type-1 domain is found at 1046 to 1299 (VAVLREQGVN…MFRNARVWLG (254 aa)). Cys1139 functions as the Nucleophile in the catalytic mechanism. Catalysis depends on residues His1264 and Glu1266.

The protein in the N-terminal section; belongs to the FGAMS family. Monomer.

The protein localises to the cytoplasm. It catalyses the reaction N(2)-formyl-N(1)-(5-phospho-beta-D-ribosyl)glycinamide + L-glutamine + ATP + H2O = 2-formamido-N(1)-(5-O-phospho-beta-D-ribosyl)acetamidine + L-glutamate + ADP + phosphate + H(+). It participates in purine metabolism; IMP biosynthesis via de novo pathway; 5-amino-1-(5-phospho-D-ribosyl)imidazole from N(2)-formyl-N(1)-(5-phospho-D-ribosyl)glycinamide: step 1/2. In terms of biological role, phosphoribosylformylglycinamidine synthase involved in the purines biosynthetic pathway. Catalyzes the ATP-dependent conversion of formylglycinamide ribonucleotide (FGAR) and glutamine to yield formylglycinamidine ribonucleotide (FGAM) and glutamate. In Myxococcus xanthus (strain DK1622), this protein is Phosphoribosylformylglycinamidine synthase.